A 520-amino-acid polypeptide reads, in one-letter code: Protein FAM124A (520 aa).

Disordered regions lie at residues 1-34 (MDRK…ELSV) and 311-334 (FKSG…SQMD). A compositionally biased stretch (low complexity) spans 20-32 (SDYSRLSSTSSEL).

Belongs to the FAM124 family.

The polypeptide is Protein FAM124A (fam124a) (Xenopus laevis (African clawed frog)).